The primary structure comprises 31 residues: LysM-domain containing protein (31 aa).

A LysM 1 repeat occupies 1–28; sequence YSPSLTDLQSYNAMNGPALKAGDILAVP.

In Jatropha curcas (Barbados nut), this protein is LysM-domain containing protein.